We begin with the raw amino-acid sequence, 216 residues long: Octanoyltransferase (216 aa).

The BPL/LPL catalytic domain maps to 35-213 (NSNPDFIWIG…TIEEEFNFDF (179 aa)). Substrate-binding positions include 77 to 84 (RGGEVTCH), 144 to 146 (SIG), and 157 to 159 (GFS). Cys-175 (acyl-thioester intermediate) is an active-site residue.

It belongs to the LipB family.

It localises to the cytoplasm. It carries out the reaction octanoyl-[ACP] + L-lysyl-[protein] = N(6)-octanoyl-L-lysyl-[protein] + holo-[ACP] + H(+). Its pathway is protein modification; protein lipoylation via endogenous pathway; protein N(6)-(lipoyl)lysine from octanoyl-[acyl-carrier-protein]: step 1/2. Catalyzes the transfer of endogenously produced octanoic acid from octanoyl-acyl-carrier-protein onto the lipoyl domains of lipoate-dependent enzymes. Lipoyl-ACP can also act as a substrate although octanoyl-ACP is likely to be the physiological substrate. The polypeptide is Octanoyltransferase (Prochlorococcus marinus (strain MIT 9301)).